A 329-amino-acid chain; its full sequence is E3 ubiquitin-protein ligase SINA-like 4 (329 aa).

The segment covering Met-1 to Gly-12 has biased composition (basic and acidic residues). Positions Met-1–Leu-58 are disordered. Residues Lys-13 to Arg-24 show a composition bias toward basic residues. An RING-type; degenerate zinc finger spans residues Cys-86 to Lys-122. Positions Val-136–Asp-325 are SBD. Residues Ala-139–Lys-198 form an SIAH-type zinc finger. The Zn(2+) site is built by Cys-144, Cys-151, His-164, Cys-168, Cys-175, Cys-180, His-192, and His-197.

This sequence belongs to the SINA (Seven in absentia) family.

It catalyses the reaction S-ubiquitinyl-[E2 ubiquitin-conjugating enzyme]-L-cysteine + [acceptor protein]-L-lysine = [E2 ubiquitin-conjugating enzyme]-L-cysteine + N(6)-ubiquitinyl-[acceptor protein]-L-lysine.. The protein operates within protein modification; protein ubiquitination. Functionally, E3 ubiquitin-protein ligase that mediates ubiquitination and subsequent proteasomal degradation of target proteins. E3 ubiquitin ligases accept ubiquitin from an E2 ubiquitin-conjugating enzyme in the form of a thioester and then directly transfers the ubiquitin to targeted substrates. It probably triggers the ubiquitin-mediated degradation of different substrates. The chain is E3 ubiquitin-protein ligase SINA-like 4 from Arabidopsis thaliana (Mouse-ear cress).